Consider the following 350-residue polypeptide: Probable DNA polymerase III subunit delta (350 aa).

The protein belongs to the DNA polymerase HolA subunit family. In terms of assembly, component of the DNA clamp loading complex consisting of tau(3):delta(1):delta'(1). The DNA polymerase III holoenzyme complex contains at least 10 different subunits organized into 3 functionally essential subassemblies: the Pol III core, the beta sliding clamp processivity factor and the clamp-loading complex. The Pol III core (subunits alpha, epsilon and theta) contains the polymerase and the 3'-5' exonuclease proofreading activities. The polymerase is tethered to the template via the dimeric beta sliding clamp processivity factor. The DNA clamp-loading complex assembles the beta sliding clamp onto the primed template and plays a central role in the organization and communication at the replication fork.

It catalyses the reaction DNA(n) + a 2'-deoxyribonucleoside 5'-triphosphate = DNA(n+1) + diphosphate. Its function is as follows. Part of the beta sliding clamp loading complex, which hydrolyzes ATP to load the beta clamp onto primed DNA to form the DNA replication pre-initiation complex. DNA polymerase III is a complex, multichain enzyme responsible for most of the replicative synthesis in bacteria. This DNA polymerase also exhibits 3'-5' exonuclease activity. The delta subunit is the wrench that will open the beta subunit dimer. The DNA clamp loading complex (tau(3),delta,delta') is thought to load beta dimers onto DNA by binding ATP which alters the complex's conformation so it can bind beta sliding clamp dimers and open them at one interface. Primed DNA is recognized, ATP is hydrolyzed releasing the clamp loading complex and closing the beta sliding clamp ring around the primed DNA. This is Probable DNA polymerase III subunit delta from Aquifex aeolicus (strain VF5).